Consider the following 471-residue polypeptide: Glutamine synthetase (471 aa).

The 86-residue stretch at 14-99 (QKIQMIDLKF…ICSIKEPRTG (86 aa)) folds into the GS beta-grasp domain. The 366-residue stretch at 106-471 (PRVIAQKAID…PYEFYLYYDC (366 aa)) folds into the GS catalytic domain. Positions 131 and 133 each coordinate Mg(2+). Glutamate 208 is an ATP binding site. Mg(2+) is bound by residues glutamate 213 and glutamate 221. L-glutamate is bound by residues 265-266 (NG) and glycine 266. Histidine 270 contributes to the Mg(2+) binding site. Residues 272 to 274 (HQS) and serine 274 contribute to the ATP site. Residues arginine 322, glutamate 328, and arginine 340 each contribute to the L-glutamate site. Positions 340, 345, and 354 each coordinate ATP. Glutamate 359 serves as a coordination point for Mg(2+). Arginine 361 serves as a coordination point for L-glutamate. Tyrosine 399 bears the O-AMP-tyrosine mark.

The protein belongs to the glutamine synthetase family. As to quaternary structure, oligomer of 12 subunits arranged in the form of two hexagons. Mg(2+) is required as a cofactor.

Its subcellular location is the cytoplasm. It carries out the reaction L-glutamate + NH4(+) + ATP = L-glutamine + ADP + phosphate + H(+). Its activity is regulated as follows. The activity of this enzyme could be controlled by adenylation under conditions of abundant glutamine. Its function is as follows. Involved in nitrogen metabolism via ammonium assimilation. Catalyzes the ATP-dependent biosynthesis of glutamine from glutamate and ammonia. The chain is Glutamine synthetase from Microchaete diplosiphon (Fremyella diplosiphon).